The chain runs to 129 residues: Protein NrdI (129 aa).

Belongs to the NrdI family.

Its function is as follows. Probably involved in ribonucleotide reductase function. The chain is Protein NrdI from Macrococcus caseolyticus (strain JCSC5402) (Macrococcoides caseolyticum).